Here is a 400-residue protein sequence, read N- to C-terminus: Na(+)/H(+) antiporter NhaA (400 aa).

A run of 12 helical transmembrane segments spans residues 26–46 (AGGI…NSPL), 71–91 (LIHW…GMEV), 107–127 (IFPA…YWFI), 137–157 (GWAI…ALLS), 166–186 (IFLL…IALF), 189–209 (HGLS…LILL), 212–232 (FKVS…ASVL), 233–253 (KSGV…PLKG), 273–293 (FVIL…GIDV), 299–319 (PLLL…IFGF), 340–360 (IFAV…LASL), and 373–393 (LSRL…YLFL).

The protein belongs to the NhaA Na(+)/H(+) (TC 2.A.33) antiporter family.

It is found in the cell inner membrane. It carries out the reaction Na(+)(in) + 2 H(+)(out) = Na(+)(out) + 2 H(+)(in). In terms of biological role, na(+)/H(+) antiporter that extrudes sodium in exchange for external protons. This is Na(+)/H(+) antiporter NhaA from Haemophilus influenzae (strain PittGG).